We begin with the raw amino-acid sequence, 79 residues long: Conotoxin 8 (79 aa).

The signal sequence occupies residues 1–22 (MKLTCVLIITVLFLTASQLITA). Residues 23–47 (DYSRGQRQYRAVRLGDEMRNFKGAR) constitute a propeptide that is removed on maturation. 3 cysteine pairs are disulfide-bonded: C49–C62, C56–C67, and C61–C77.

The protein belongs to the conotoxin O1 superfamily. In terms of tissue distribution, expressed by the venom duct.

The protein localises to the secreted. This is Conotoxin 8 from Conus vexillum (Flag cone).